Here is a 213-residue protein sequence, read N- to C-terminus: MTDQSHQCVIIGIAGASASGKSLIASTLYRELREQVGDEHIGVIPEDCYYKDQSHLSMEERVKTNYDHPSAMDHSLLLEHLQALKRGSAIDLPVYSYVEHTRMKETVTVEPKKVIILEGILLLTDARLRDELNFSIFVDTPLDICLMRRIKRDVNERGRSMDSVMAQYQKTVRPMFLQFIEPSKQYADIIVPRGGKNRIAIDILKAKISQFFE.

Residue 15–22 (GASASGKS) coordinates ATP.

Belongs to the uridine kinase family.

It is found in the cytoplasm. It catalyses the reaction uridine + ATP = UMP + ADP + H(+). The enzyme catalyses cytidine + ATP = CMP + ADP + H(+). Its pathway is pyrimidine metabolism; CTP biosynthesis via salvage pathway; CTP from cytidine: step 1/3. It functions in the pathway pyrimidine metabolism; UMP biosynthesis via salvage pathway; UMP from uridine: step 1/1. The polypeptide is Uridine kinase (Escherichia coli O157:H7).